The chain runs to 133 residues: Small ribosomal subunit protein uS8 (133 aa).

It belongs to the universal ribosomal protein uS8 family. In terms of assembly, part of the 30S ribosomal subunit.

Functionally, one of the primary rRNA binding proteins, it binds directly to 16S rRNA central domain where it helps coordinate assembly of the platform of the 30S subunit. This is Small ribosomal subunit protein uS8 from Saccharolobus solfataricus (strain ATCC 35092 / DSM 1617 / JCM 11322 / P2) (Sulfolobus solfataricus).